The sequence spans 1226 residues: DNA-directed RNA polymerase subunit beta (1226 aa).

The protein belongs to the RNA polymerase beta chain family. The RNAP catalytic core consists of 2 alpha, 1 beta, 1 beta' and 1 omega subunit. When a sigma factor is associated with the core the holoenzyme is formed, which can initiate transcription.

It carries out the reaction RNA(n) + a ribonucleoside 5'-triphosphate = RNA(n+1) + diphosphate. In terms of biological role, DNA-dependent RNA polymerase catalyzes the transcription of DNA into RNA using the four ribonucleoside triphosphates as substrates. This is DNA-directed RNA polymerase subunit beta from Leptospira interrogans serogroup Icterohaemorrhagiae serovar Lai (strain 56601).